Reading from the N-terminus, the 1722-residue chain is Signal-induced proliferation-associated 1-like protein 2 (1722 aa).

Disordered stretches follow at residues 1-29 and 44-72; these read MSDPRPSQAEKHKLGRAAAKLKDPSRTMQ and SMGPATLNTSSSSEGGGGGGGPANGTPAV. Gly residues predominate over residues 57 to 66; it reads EGGGGGGGPA. 3 positions are modified to phosphoserine: serine 149, serine 380, and serine 384. Residues 362-405 are disordered; the sequence is ASAASQTPVPVGPAGGCESPLGSKEDLNSKENPDADEGDGKSND. Over residues 384–403 the composition is skewed to basic and acidic residues; that stretch reads SKEDLNSKENPDADEGDGKS. The Rap-GAP domain occupies 596-813; sequence LLKLDEQGLS…RTRQEYLKDL (218 aa). Residues 951 to 1027 enclose the PDZ domain; that stretch reads EMTLRRNGLG…VKVVIIQPHE (77 aa). Phosphoserine is present on serine 1030. Disordered stretches follow at residues 1068–1246 and 1331–1360; these read HRVP…FGSG and GSMGDLSEVSSHSSGSQHSGSPSAHCSKST. Low complexity-rich tracts occupy residues 1091–1103 and 1120–1131; these read LQCQPLLQQAQAA and SSPSNQSSSSDP. Residues 1195 to 1218 are compositionally biased toward basic and acidic residues; that stretch reads YKERVLQKDGSCKESPNKLSHIGD. Over residues 1220–1237 the composition is skewed to low complexity; sequence SCSSHSSSNTLSSNTSSN. Serine 1245 carries the phosphoserine modification. Low complexity predominate over residues 1331 to 1355; sequence GSMGDLSEVSSHSSGSQHSGSPSAH. A phosphoserine mark is found at serine 1461, serine 1472, serine 1478, serine 1488, serine 1549, serine 1552, and serine 1591. A coiled-coil region spans residues 1652–1712; it reads STLTGKVNQL…ATAQLRKFTE (61 aa).

This Mus musculus (Mouse) protein is Signal-induced proliferation-associated 1-like protein 2 (Sipa1l2).